The chain runs to 1511 residues: DNA-directed RNA polymerase subunit beta' (1511 aa).

4 residues coordinate Zn(2+): Cys75, Cys77, Cys90, and Cys93. Mg(2+) contacts are provided by Asp474, Asp476, and Asp478. Residues Cys804, Cys878, Cys885, and Cys888 each coordinate Zn(2+).

It belongs to the RNA polymerase beta' chain family. In terms of assembly, the RNAP catalytic core consists of 2 alpha, 1 beta, 1 beta' and 1 omega subunit. When a sigma factor is associated with the core the holoenzyme is formed, which can initiate transcription. It depends on Mg(2+) as a cofactor. The cofactor is Zn(2+).

The catalysed reaction is RNA(n) + a ribonucleoside 5'-triphosphate = RNA(n+1) + diphosphate. Its function is as follows. DNA-dependent RNA polymerase catalyzes the transcription of DNA into RNA using the four ribonucleoside triphosphates as substrates. This Aliarcobacter butzleri (strain RM4018) (Arcobacter butzleri) protein is DNA-directed RNA polymerase subunit beta'.